The chain runs to 121 residues: Cell division protein FtsB (121 aa).

The Cytoplasmic segment spans residues 1 to 6 (MRNWRW). A helical membrane pass occupies residues 7–24 (LLLVLAVLLAWLQYRFWF). The Periplasmic segment spans residues 25 to 121 (GPGNSGEVMM…PASTDPVDHP (97 aa)). Residues 31 to 66 (EVMMLEAQVAHQTQDNEGLRQRNQALAAEVKDLKDG) are a coiled coil. The disordered stretch occupies residues 94–121 (APLPAPASPETAAPAQQAPASTDPVDHP). The segment covering 101–121 (SPETAAPAQQAPASTDPVDHP) has biased composition (low complexity).

It belongs to the FtsB family. As to quaternary structure, part of a complex composed of FtsB, FtsL and FtsQ.

The protein resides in the cell inner membrane. Essential cell division protein. May link together the upstream cell division proteins, which are predominantly cytoplasmic, with the downstream cell division proteins, which are predominantly periplasmic. This is Cell division protein FtsB from Xanthomonas oryzae pv. oryzae (strain MAFF 311018).